The sequence spans 430 residues: Replication protein A 32 kDa subunit C (430 aa).

A disordered region spans residues 14-46 (MPSQRSGAPAPEYSAAGTGAAAAPSPSKPRDPR). The segment covering 23-38 (APEYSAAGTGAAAAPS) has biased composition (low complexity). The OB DNA-binding region spans 86–160 (VRVLGRVVSV…QGLARSIRPI (75 aa)).

This sequence belongs to the replication factor A protein 2 family. In terms of assembly, heterotrimer of RPA1, RPA2 and RPA3 (canonical replication protein A complex). Interacts with RPA1C and RPA3. Phosphorylated in a cell-cycle-dependent manner (from the S phase until mitosis). In response to DNA damage, recruited to DNA-repair nuclear foci, as a hypophosphorylated form.

The protein localises to the nucleus. Component of the replication protein A complex (RPA) required for DNA recombination, repair and replication. The activity of RPA is mediated by single-stranded DNA binding and protein interactions. This Oryza sativa subsp. japonica (Rice) protein is Replication protein A 32 kDa subunit C (RPA2C).